The following is a 180-amino-acid chain: UPF0227 protein YcfP (180 aa).

It belongs to the UPF0227 family.

The sequence is that of UPF0227 protein YcfP from Escherichia coli O7:K1 (strain IAI39 / ExPEC).